The primary structure comprises 819 residues: DNA topoisomerase 4 subunit A (819 aa).

Residues 30 to 496 (LPDIRDGLKP…QIIEIDTASL (467 aa)) form the Topo IIA-type catalytic domain. The active-site O-(5'-phospho-DNA)-tyrosine intermediate is the Tyr118.

It belongs to the type II topoisomerase GyrA/ParC subunit family. ParC type 2 subfamily. In terms of assembly, heterotetramer composed of ParC and ParE.

It is found in the cell membrane. The enzyme catalyses ATP-dependent breakage, passage and rejoining of double-stranded DNA.. Its function is as follows. Topoisomerase IV is essential for chromosome segregation. It relaxes supercoiled DNA. Performs the decatenation events required during the replication of a circular DNA molecule. The polypeptide is DNA topoisomerase 4 subunit A (Streptococcus pyogenes serotype M18 (strain MGAS8232)).